We begin with the raw amino-acid sequence, 385 residues long: 1-deoxy-D-xylulose 5-phosphate reductoisomerase (385 aa).

Residues T10, G11, S12, I13, K37, and N124 each coordinate NADPH. Residue K125 coordinates 1-deoxy-D-xylulose 5-phosphate. Position 126 (E126) interacts with NADPH. D150 serves as a coordination point for Mn(2+). S151, E152, S176, and H199 together coordinate 1-deoxy-D-xylulose 5-phosphate. Residue E152 participates in Mn(2+) binding. G205 provides a ligand contact to NADPH. 1-deoxy-D-xylulose 5-phosphate is bound by residues S212, N217, K218, and E221. Residue E221 coordinates Mn(2+).

Belongs to the DXR family. Mg(2+) serves as cofactor. The cofactor is Mn(2+).

The catalysed reaction is 2-C-methyl-D-erythritol 4-phosphate + NADP(+) = 1-deoxy-D-xylulose 5-phosphate + NADPH + H(+). It participates in isoprenoid biosynthesis; isopentenyl diphosphate biosynthesis via DXP pathway; isopentenyl diphosphate from 1-deoxy-D-xylulose 5-phosphate: step 1/6. Catalyzes the NADPH-dependent rearrangement and reduction of 1-deoxy-D-xylulose-5-phosphate (DXP) to 2-C-methyl-D-erythritol 4-phosphate (MEP). This chain is 1-deoxy-D-xylulose 5-phosphate reductoisomerase, found in Clostridium botulinum (strain Kyoto / Type A2).